A 251-amino-acid chain; its full sequence is Probable caffeoyl-CoA O-methyltransferase 3 (251 aa).

S-adenosyl-L-methionine contacts are provided by residues T61, D83, 85–86 (GV), S91, D109, and A138. Residue D160 participates in a divalent metal cation binding. Residue D162 coordinates S-adenosyl-L-methionine. A divalent metal cation is bound by residues D186 and N187.

This sequence belongs to the class I-like SAM-binding methyltransferase superfamily. Cation-dependent O-methyltransferase family. CCoAMT subfamily.

The catalysed reaction is (E)-caffeoyl-CoA + S-adenosyl-L-methionine = (E)-feruloyl-CoA + S-adenosyl-L-homocysteine + H(+). This Dictyostelium discoideum (Social amoeba) protein is Probable caffeoyl-CoA O-methyltransferase 3 (omt1).